Reading from the N-terminus, the 590-residue chain is MAPEIHMPEPLCLIGSTEGHLVTNQEALKILSAITQPVVVVAIVGLYRTGKSYLMNKLAGKEKGFSVGSTVQSHTKGIWMWCVPHPQKPDHTLVLLDTEGLGDVEKDDKKNDTQIFALAILLSSTFVYNTMNKIDQGAIDLLHNVTELTDLLRTRNSSDSNQTEGEGPADMSFFPDLVWTLRDFFLDLQANGHAITSDEYLENSLKLKQGSDERTQTFNLPRLCIQKFFPVKKCFVFDAPALGSKLSQLPTLSNEELNSDFVQDLSEFCSHIFTQSKTKTLPGGIQVNGPRLESLVLTYVDAINSGALPSIENTVVTLARRENSAAVQKAIGHYDQLMSEKVQLPTETLQELLDLHRTCEREAIEIFRKHSFKDEGEFFQKELESLLSAKQDEICKKNADASAALCSTLLGSIFKPLEQEVAQEFYHKPGGHKLFLQRMEQLKANYRQQPGKGTQAEEVLQTYLNAKETVSRTILQTDQVLTDKEIQSKAEQERAEAARLEAQRLEAIRIQEEQRKAEMERQHQEQLRQIALEKARVAQEQQWILKQRAQEEADRIKAEQEAQLRALQQQLQHMREMNHHRRHHHDCVIS.

Positions 1-306 are NLRP3-binding; it reads MAPEIHMPEP…LTYVDAINSG (306 aa). The segment at 1 to 310 is GTPase domain (Globular); that stretch reads MAPEIHMPEP…DAINSGALPS (310 aa). In terms of domain architecture, GB1/RHD3-type G spans 35–277; that stretch reads TQPVVVVAIV…FCSHIFTQSK (243 aa). Residues 45-52, 67-69, 182-183, and Leu-246 contribute to the GTP site; these read GLYRTGKS, VGS, and RD. The interval 529–590 is required for tetramerization, but not for dimerization; sequence QIALEKARVA…RRHHHDCVIS (62 aa). The residue at position 587 (Cys-587) is a Cysteine methyl ester. The S-geranylgeranyl cysteine moiety is linked to residue Cys-587. Residues 588 to 590 constitute a propeptide, removed in mature form; that stretch reads VIS.

This sequence belongs to the TRAFAC class dynamin-like GTPase superfamily. GB1/RHD3 GTPase family. GB1 subfamily. As to quaternary structure, homodimer; homodimerizes upon GTP-binding, forming a close face-to-face dimer. Heterodimer with other family members, including GBP1, GBP2, GBP3 and GBP4. May also form tetramers (dimer of dimers) in the presence of GTP. Interacts with NLRP3, possibly in its tetrameric form, and promotes PYCARD/ASC polymerization. Post-translationally, isoprenylation is required for proper subcellular location. As to expression, low expression, if any, in many tissues in the absence of stimulation.

It localises to the cytoplasmic vesicle membrane. The protein resides in the golgi apparatus membrane. Its subcellular location is the cytoplasm. The catalysed reaction is GTP + H2O = GDP + phosphate + H(+). Its function is as follows. Interferon (IFN)-inducible GTPase that plays important roles in innate immunity against a diverse range of bacterial, viral and protozoan pathogens. Hydrolyzes GTP, but in contrast to other family members, does not produce GMP. Following infection, recruited to the pathogen-containing vacuoles or vacuole-escaped bacteria and acts as a positive regulator of inflammasome assembly by promoting the release of inflammasome ligands from bacteria. Acts by promoting lysis of pathogen-containing vacuoles, releasing pathogens into the cytosol. Following pathogen release in the cytosol, promotes recruitment of proteins that mediate bacterial cytolysis, such as Gm12250/Irgb10: this liberates ligands that are detected by inflammasomes, such as lipopolysaccharide (LPS) that activates the non-canonical CASP4/CASP11 inflammasome or double-stranded DNA (dsDNA) that activates the AIM2 inflammasome. As an activator of NLRP3 inflammasome assembly: promotes selective NLRP3 inflammasome assembly in response to microbial and soluble, but not crystalline, agents. Independently of its GTPase activity, acts as an inhibitor of various viruses infectivity by inhibiting FURIN-mediated maturation of viral envelope proteins. The chain is Guanylate-binding protein 5 from Mus musculus (Mouse).